Here is a 381-residue protein sequence, read N- to C-terminus: Gustatory and pheromone receptor 39a, isoform C (381 aa).

Residues 1–37 (MDFQPGELCAYYRLCRYLGIFCIDYNPTKKKFRLRRS) lie on the Cytoplasmic side of the membrane. Residues 38 to 58 (VLCYIVHFALQAYLVGCISVM) traverse the membrane as a helical segment. At 59 to 79 (VTYWRRCFKSELTTTGNHFDR) the chain is on the extracellular side. The helical transmembrane segment at 80 to 100 (LVMVIALGILVVQNAWLIWLQ) threads the bilayer. At 101-129 (APHLRIVRQIEFYRRNHLANVRLLLPKRL) the chain is on the cytoplasmic side. Residues 130–150 (LWLIIATNVVYMANFIKTCIF) form a helical membrane-spanning segment. Topologically, residues 151–171 (EWLTDASRLFVITSLGFPLRY) are extracellular. A helical membrane pass occupies residues 172 to 192 (LVTSFTMGTYFCMVHIVRLVL). Residues 193-239 (DWNQSQINAIIDESADLKMTSPNRLRLRVCLEMHDRLMLLCNDEISL) lie on the Cytoplasmic side of the membrane. Residues 240–260 (VYGFIAWLSWMFASLDVTGVI) form a helical membrane-spanning segment. Over 261-271 (YLTMVIQTKKS) the chain is Extracellular. Residues 272–292 (IVLKLITNVVWLSPTFMTCAA) traverse the membrane as a helical segment. Topologically, residues 293–350 (SFMSNRVTIQANKTAKMLTKVPRTGTGLDRMIEKFLLKNLRQKPILTAYGFFALDKST) are cytoplasmic. A helical transmembrane segment spans residues 351–371 (LFKLFTAIFTYMVILVQFKEM). Topologically, residues 372-381 (ENSTKSINKF) are extracellular. Residue asparagine 373 is glycosylated (N-linked (GlcNAc...) asparagine).

It belongs to the insect chemoreceptor superfamily. Gustatory receptor (GR) family. Gr21a subfamily. Expressed in the adult labellar chemosensory neurons. In larvae, is expressed in neurons of the terminal external chemosensory organ, as well as in the dorsal pharyngeal sense organ.

Its subcellular location is the cell membrane. In terms of biological role, gustatory receptor which mediates acceptance or avoidance behavior, depending on its substrates. Plays a role in sustaining courtship behavior in males, possibly through the reception of a stimulating arrestant pheromone. This Drosophila melanogaster (Fruit fly) protein is Gustatory and pheromone receptor 39a, isoform C (Gr39a).